Here is a 342-residue protein sequence, read N- to C-terminus: Tetraacyldisaccharide 4'-kinase (342 aa).

Position 68–75 (68–75) interacts with ATP; sequence TVGGTGKT.

Belongs to the LpxK family.

The enzyme catalyses a lipid A disaccharide + ATP = a lipid IVA + ADP + H(+). It participates in glycolipid biosynthesis; lipid IV(A) biosynthesis; lipid IV(A) from (3R)-3-hydroxytetradecanoyl-[acyl-carrier-protein] and UDP-N-acetyl-alpha-D-glucosamine: step 6/6. Functionally, transfers the gamma-phosphate of ATP to the 4'-position of a tetraacyldisaccharide 1-phosphate intermediate (termed DS-1-P) to form tetraacyldisaccharide 1,4'-bis-phosphate (lipid IVA). In Burkholderia cenocepacia (strain HI2424), this protein is Tetraacyldisaccharide 4'-kinase.